Consider the following 489-residue polypeptide: 3-octaprenyl-4-hydroxybenzoate carboxy-lyase (489 aa).

N172 provides a ligand contact to Mn(2+). Residues 175 to 177 (IYR), 189 to 191 (RWL), and 194 to 195 (RG) contribute to the prenylated FMN site. E238 provides a ligand contact to Mn(2+). D287 (proton donor) is an active-site residue.

It belongs to the UbiD family. As to quaternary structure, homohexamer. It depends on prenylated FMN as a cofactor. Requires Mn(2+) as cofactor.

The protein localises to the cell membrane. It catalyses the reaction a 4-hydroxy-3-(all-trans-polyprenyl)benzoate + H(+) = a 2-(all-trans-polyprenyl)phenol + CO2. It participates in cofactor biosynthesis; ubiquinone biosynthesis. Catalyzes the decarboxylation of 3-octaprenyl-4-hydroxy benzoate to 2-octaprenylphenol, an intermediate step in ubiquinone biosynthesis. This Psychromonas ingrahamii (strain DSM 17664 / CCUG 51855 / 37) protein is 3-octaprenyl-4-hydroxybenzoate carboxy-lyase.